Reading from the N-terminus, the 223-residue chain is Protein disulfide-isomerase-like protein EhSep2 (223 aa).

A signal peptide spans 1–17 (MALRSLTLLCAAAGASA). The 108-residue stretch at 18-125 (GAIELTPDNF…DELKKFAENE (108 aa)) folds into the Thioredoxin domain. Residue selenocysteine 47 is a non-standard amino acid, selenocysteine. A coiled-coil region spans residues 155-201 (EKRTEMLETLKKELADAESTHEALLKELQATYKESMDKLEKLKEESA). The disordered stretch occupies residues 201-223 (APKIKLLKAATPAPKAEGAKDEV). Residues 203 to 216 (KIKLLKAATPAPKA) are compositionally biased toward low complexity. Residues 220–223 (KDEV) carry the Prevents secretion from ER motif.

This sequence belongs to the protein disulfide isomerase family.

The protein localises to the endoplasmic reticulum lumen. This is Protein disulfide-isomerase-like protein EhSep2 (SEP2) from Emiliania huxleyi (Coccolithophore).